The primary structure comprises 77 residues: Acyl carrier protein (77 aa).

The region spanning 1-76 (MAIFDDVKKV…DVVNYIENLQ (76 aa)) is the Carrier domain. Residue Ser36 is modified to O-(pantetheine 4'-phosphoryl)serine.

It belongs to the acyl carrier protein (ACP) family. Post-translationally, 4'-phosphopantetheine is transferred from CoA to a specific serine of apo-ACP by AcpS. This modification is essential for activity because fatty acids are bound in thioester linkage to the sulfhydryl of the prosthetic group.

Its subcellular location is the cytoplasm. It participates in lipid metabolism; fatty acid biosynthesis. In terms of biological role, carrier of the growing fatty acid chain in fatty acid biosynthesis. The polypeptide is Acyl carrier protein (Campylobacter lari (strain RM2100 / D67 / ATCC BAA-1060)).